Reading from the N-terminus, the 120-residue chain is uncharacterized protein (120 aa).

The first 18 residues, 1–18 (MRSWIPLLVLFAVLAVFA), serve as a signal peptide directing secretion. Residues 20–99 (AGKSSESDES…GDNRVKRDGL (80 aa)) form a disordered region.

This is an uncharacterized protein from Caenorhabditis elegans.